We begin with the raw amino-acid sequence, 287 residues long: Beta-lactamase GES-2 (287 aa).

The first 18 residues, 1–18, serve as a signal peptide directing secretion; that stretch reads MRFIHALLLAGIAHSAYA. C63 and C233 form a disulfide bridge. S64 functions as the Nucleophile; acyl-ester intermediate in the catalytic mechanism. Residues K67, S125, and E161 each contribute to the a beta-lactam site.

The protein belongs to the class-A beta-lactamase family.

It catalyses the reaction a beta-lactam + H2O = a substituted beta-amino acid. With respect to regulation, inhibited by the beta-lactamase-blocking agents clavulanic acid, sulbactam and tazobactam. Extended-spectrum beta-lactamase (ESBL) which confers resistance to penicillins, as well as first, third and fourth-generation cephalosporins. Has modest carbapenem-hydrolyzing activity. Has cefotaxime-hydrolyzing activity. In Pseudomonas aeruginosa, this protein is Beta-lactamase GES-2.